The primary structure comprises 514 residues: 1-pyrroline-5-carboxylate dehydrogenase (514 aa).

Catalysis depends on residues E286 and C320.

The protein belongs to the aldehyde dehydrogenase family. RocA subfamily.

It carries out the reaction L-glutamate 5-semialdehyde + NAD(+) + H2O = L-glutamate + NADH + 2 H(+). The protein operates within amino-acid degradation; L-proline degradation into L-glutamate; L-glutamate from L-proline: step 2/2. This is 1-pyrroline-5-carboxylate dehydrogenase from Staphylococcus saprophyticus subsp. saprophyticus (strain ATCC 15305 / DSM 20229 / NCIMB 8711 / NCTC 7292 / S-41).